The chain runs to 45 residues: Bomanin Short 1 (45 aa).

The N-terminal stretch at 1–20 (MKFFSVVTVFVLGLLAVANA) is a signal peptide. The propeptide at 21–27 (VPLSPDP) is removed by a dipeptidylpeptidase. Cys36 and Cys39 are oxidised to a cystine. Gly43 carries the post-translational modification Glycine amide.

Hemolymph (at protein level).

It is found in the secreted. In terms of biological role, secreted immune-induced peptide induced by Toll signaling. Has a role in resistance to bacterial and fungal infections. Has no activity against the fungus C.glabrata in vitro. The chain is Bomanin Short 1 from Drosophila melanogaster (Fruit fly).